A 483-amino-acid polypeptide reads, in one-letter code: Aspartyl/glutamyl-tRNA(Asn/Gln) amidotransferase subunit B (483 aa).

Belongs to the GatB/GatE family. GatB subfamily. As to quaternary structure, heterotrimer of A, B and C subunits.

The enzyme catalyses L-glutamyl-tRNA(Gln) + L-glutamine + ATP + H2O = L-glutaminyl-tRNA(Gln) + L-glutamate + ADP + phosphate + H(+). It catalyses the reaction L-aspartyl-tRNA(Asn) + L-glutamine + ATP + H2O = L-asparaginyl-tRNA(Asn) + L-glutamate + ADP + phosphate + 2 H(+). Its function is as follows. Allows the formation of correctly charged Asn-tRNA(Asn) or Gln-tRNA(Gln) through the transamidation of misacylated Asp-tRNA(Asn) or Glu-tRNA(Gln) in organisms which lack either or both of asparaginyl-tRNA or glutaminyl-tRNA synthetases. The reaction takes place in the presence of glutamine and ATP through an activated phospho-Asp-tRNA(Asn) or phospho-Glu-tRNA(Gln). The sequence is that of Aspartyl/glutamyl-tRNA(Asn/Gln) amidotransferase subunit B from Rickettsia rickettsii (strain Iowa).